Here is a 260-residue protein sequence, read N- to C-terminus: Ribose-5-phosphate isomerase (260 aa).

This sequence belongs to the ribose 5-phosphate isomerase family.

Its subcellular location is the cytoplasm. It catalyses the reaction aldehydo-D-ribose 5-phosphate = D-ribulose 5-phosphate. It participates in carbohydrate degradation; pentose phosphate pathway; D-ribose 5-phosphate from D-ribulose 5-phosphate (non-oxidative stage): step 1/1. The protein is Ribose-5-phosphate isomerase (RKI1) of Candida glabrata (strain ATCC 2001 / BCRC 20586 / JCM 3761 / NBRC 0622 / NRRL Y-65 / CBS 138) (Yeast).